Reading from the N-terminus, the 324-residue chain is Antihemorrhagic factor cHLP-A (324 aa).

The N-terminal stretch at 1–19 (MNSLVALVLLGQIIGSTLS) is a signal peptide. 2 Cystatin fetuin-A-type domains span residues 21 to 130 (QLGP…VKCK) and 141 to 254 (RNCP…SDCV). Cystine bridges form between cysteine 28-cysteine 315, cysteine 85-cysteine 96, cysteine 110-cysteine 129, cysteine 143-cysteine 146, cysteine 205-cysteine 217, and cysteine 230-cysteine 253. Asparagine 204 carries an N-linked (GlcNAc...) asparagine glycan. Asparagine 282 is a glycosylation site (N-linked (GlcNAc...) asparagine).

It belongs to the fetuin family. Homodimer. Expressed by the liver.

It is found in the secreted. In terms of biological role, potent inhibitor of hemorrhagic activity but also proteolytic activities. Inhibition occurs by formation of a non-covalent complex between this protein and the proteinases at their metalloproteinase domains. In Gloydius brevicauda (Korean slamosa snake), this protein is Antihemorrhagic factor cHLP-A.